The primary structure comprises 495 residues: WD repeat-containing protein 37 (495 aa).

Composition is skewed to polar residues over residues 1 to 13 (MPTE…TARQ) and 22 to 31 (SLSIRRTNSS). The tract at residues 1 to 50 (MPTESASCSTARQTKQKRKSHSLSIRRTNSSEQERTGLPRDMLEGQDSKL) is disordered. Positions 32–47 (EQERTGLPRDMLEGQD) are enriched in basic and acidic residues. 2 WD repeats span residues 154 to 194 (GHRD…CLVK) and 197 to 236 (GHVG…PTPQ). Positions 237-266 (PVADTSQISGEDEVECSDKDEPDLDGDVSS) are disordered. The segment covering 246–264 (GEDEVECSDKDEPDLDGDV) has biased composition (acidic residues). WD repeat units follow at residues 280–319 (SHQG…LVHS), 322–361 (GHDQ…IHSV), 366–404 (GHTD…SPIA), 407–446 (RTDS…LARL), and 453–494 (GHRR…LLQE).

As to quaternary structure, forms homodimers. Interacts with PACS1. Interacts with PACS2.

The protein resides in the cytoplasm. The protein localises to the nucleus. Functionally, required for normal ER Ca2+ handling in lymphocytes. Together with PACS1, it plays an essential role in stabilizing peripheral lymphocyte populations. The chain is WD repeat-containing protein 37 (WDR37) from Pongo abelii (Sumatran orangutan).